The sequence spans 314 residues: uncharacterized protein (314 aa).

The tract at residues 39-146 (QENVDSDSTD…SDYSSDESNS (108 aa)) is disordered. Over residues 56–76 (STKNVSRNIPKNIPKSISKNI) the composition is skewed to polar residues. The span at 88–131 (IPKNVSKNIPKNVPKNVSKNIPKNIPKNVPNKSRNKYSNYSEDS) shows a compositional bias: low complexity. Residues 132 to 141 (NYSEDSDYSS) are compositionally biased toward acidic residues.

This is an uncharacterized protein from Acanthamoeba polyphaga mimivirus (APMV).